The chain runs to 150 residues: D-aminoacyl-tRNA deacylase (150 aa).

The Gly-cisPro motif, important for rejection of L-amino acids motif lies at 136–137 (GP).

Belongs to the DTD family. Homodimer.

Its subcellular location is the cytoplasm. The enzyme catalyses glycyl-tRNA(Ala) + H2O = tRNA(Ala) + glycine + H(+). The catalysed reaction is a D-aminoacyl-tRNA + H2O = a tRNA + a D-alpha-amino acid + H(+). In terms of biological role, an aminoacyl-tRNA editing enzyme that deacylates mischarged D-aminoacyl-tRNAs. Also deacylates mischarged glycyl-tRNA(Ala), protecting cells against glycine mischarging by AlaRS. Acts via tRNA-based rather than protein-based catalysis; rejects L-amino acids rather than detecting D-amino acids in the active site. By recycling D-aminoacyl-tRNA to D-amino acids and free tRNA molecules, this enzyme counteracts the toxicity associated with the formation of D-aminoacyl-tRNA entities in vivo and helps enforce protein L-homochirality. The chain is D-aminoacyl-tRNA deacylase from Staphylococcus aureus (strain Mu50 / ATCC 700699).